We begin with the raw amino-acid sequence, 185 residues long: MLTLASKLKRDDGVRGPRASNPASDSTRRVSVRDKLLVKEVAELEANLPCTCKVNFPDPNKLHYFQLTVIPDEGYYQGGKFQFEIEVPDAYNMVPPKVKCLTRIWHPNITETGEICLSLLREHSIDGTGWAPTRTLKDVVWGLNSLFTDLLNFDDPLNIEAAEHHLRDKEDFRNKVEDYIKRYAR.

The tract at residues 1–29 is interaction with UBA3; it reads MLTLASKLKRDDGVRGPRASNPASDSTRR. A disordered region spans residues 11-30; that stretch reads DDGVRGPRASNPASDSTRRV. Residues 32 to 185 enclose the UBC core domain; that stretch reads VRDKLLVKEV…VEDYIKRYAR (154 aa). Residue cysteine 116 is the Glycyl thioester intermediate of the active site.

It belongs to the ubiquitin-conjugating enzyme family. UBE2F subfamily.

The catalysed reaction is [E1 NEDD8-activating enzyme]-S-[NEDD8 protein]-yl-L-cysteine + [E2 NEDD8-conjugating enzyme]-L-cysteine = [E1 NEDD8-activating enzyme]-L-cysteine + [E2 NEDD8-conjugating enzyme]-S-[NEDD8-protein]-yl-L-cysteine.. It functions in the pathway protein modification; protein neddylation. Its function is as follows. Accepts the ubiquitin-like protein NEDD8 from the UBA3-NAE1 E1 complex and catalyzes its covalent attachment to other proteins. Together with the E3 ubiquitin ligase RNF7/RBX2, specifically neddylates cullin-5 (CUL5). Does not neddylate CUL1, CUL2, CUL3, CUL4A or CUL4B. In Gallus gallus (Chicken), this protein is NEDD8-conjugating enzyme UBE2F (UBE2F).